The primary structure comprises 1937 residues: Myosin-2 (1937 aa).

The Myosin N-terminal SH3-like domain maps to 33-82 (DAKTSVFVAEPKESFVKGTIQSREGGKVTVKTDAGATLTVKEDQVFPMNP). T64 and T69 each carry phosphothreonine. One can recognise a Myosin motor domain in the interval 86–780 (DKIEDMAMMT…LLGLLEEMRD (695 aa)). An N6,N6,N6-trimethyllysine modification is found at K130. 179–186 (GESGAGKT) contacts ATP. Position 387 is a phosphotyrosine (Y387). T417 bears the Phosphothreonine mark. S623 carries the phosphoserine modification. Positions 657–679 (LNKLMTNLRSTHPHFVRCIIPNE) are actin-binding. H755 carries the post-translational modification Pros-methylhistidine. The segment at 759 to 773 (KFGHTKVFFKAGLLG) is actin-binding. Residues 783–812 (LAQIITRTQARCRGFLARVEYQKMVERRES) form the IQ domain. Residues 841–1937 (LLKSAETEKE…EVHTKIISEE (1097 aa)) are a coiled coil. S1094 is subject to Phosphoserine. Disordered stretches follow at residues 1124-1145 (IEAERASRAKAEKQRSDLSREL) and 1151-1170 (RLEEAGGATSAQIEMNKKRE). Basic and acidic residues predominate over residues 1126 to 1145 (AERASRAKAEKQRSDLSREL). 2 positions are modified to phosphoserine: S1160 and S1235. At T1239 the chain carries Phosphothreonine. The residue at position 1241 (S1241) is a Phosphoserine. Residue T1253 is modified to Phosphothreonine. S1259 is modified (phosphoserine). T1284 carries the post-translational modification Phosphothreonine. Phosphoserine occurs at positions 1290, 1301, and 1304. Y1462 bears the Phosphotyrosine mark. A Phosphothreonine modification is found at T1465. Residue S1472 is modified to Phosphoserine. Y1490 bears the Phosphotyrosine mark. S1493 carries the phosphoserine modification. T1499 is modified (phosphothreonine). At S1512 the chain carries Phosphoserine. Phosphothreonine is present on T1515. S1540, S1552, S1572, S1712, and S1724 each carry phosphoserine. Phosphothreonine occurs at positions 1728 and 1734. S1737 carries the post-translational modification Phosphoserine. Positions 1883-1913 (QAEEAEEQSNTNLSKFRKLQHELEEAEERAD) are disordered.

This sequence belongs to the TRAFAC class myosin-kinesin ATPase superfamily. Myosin family. In terms of assembly, muscle myosin is a hexameric protein that consists of 2 heavy chain subunits (MHC), 2 alkali light chain subunits (MLC) and 2 regulatory light chain subunits (MLC-2). Interacts with GCSAM.

The protein localises to the cytoplasm. Its subcellular location is the myofibril. In terms of biological role, myosins are actin-based motor molecules with ATPase activity essential for muscle contraction. The protein is Myosin-2 (MYH2) of Equus caballus (Horse).